A 540-amino-acid polypeptide reads, in one-letter code: Chaperonin GroEL (540 aa).

ATP contacts are provided by residues 29–32, 86–90, Gly-413, 478–480, and Asp-494; these read TLGP, DGTTT, and DAL.

It belongs to the chaperonin (HSP60) family. Forms a cylinder of 14 subunits composed of two heptameric rings stacked back-to-back. Interacts with the co-chaperonin GroES.

It is found in the cytoplasm. The enzyme catalyses ATP + H2O + a folded polypeptide = ADP + phosphate + an unfolded polypeptide.. In terms of biological role, together with its co-chaperonin GroES, plays an essential role in assisting protein folding. The GroEL-GroES system forms a nano-cage that allows encapsulation of the non-native substrate proteins and provides a physical environment optimized to promote and accelerate protein folding. This Clostridioides difficile (Peptoclostridium difficile) protein is Chaperonin GroEL.